We begin with the raw amino-acid sequence, 237 residues long: DNA repair protein RecO (237 aa).

It belongs to the RecO family.

In terms of biological role, involved in DNA repair and RecF pathway recombination. This Rickettsia akari (strain Hartford) protein is DNA repair protein RecO.